The sequence spans 35 residues: Beta-theraphotoxin-Hlv1a (35 aa).

3 disulfide bridges follow: Cys-2–Cys-17, Cys-9–Cys-24, and Cys-16–Cys-31.

This sequence belongs to the neurotoxin 10 (Hwtx-1) family. 10 (haplotoxin-1) subfamily. In terms of tissue distribution, expressed by the venom gland.

The protein resides in the secreted. In terms of biological role, spider venom neurotoxin that blocks voltage-gated sodium channel Nav1.3/SCN3A in human (IC(50)=1 uM) and rat (IC(50)=1 uM). The sequence is that of Beta-theraphotoxin-Hlv1a from Cyriopagopus lividus (Cobalt blue tarantula).